The primary structure comprises 348 residues: NADH-ubiquinone oxidoreductase chain 2 (348 aa).

The next 10 helical transmembrane spans lie at 2–22 (SPYVFLIISISLFLGTSLTLF), 26–46 (WLMAWMGLEINTLAIIPMMTY), 55–75 (AAIKYFLTQATASMLVMFAII), 96–116 (VLMTLALAMKLGLAPFHFWVP), 149–169 (LNMKVLITLAFLSTMLGGWGG), 178–198 (ILAYSSIAHMGWMTIVMMINP), 199–219 (SLALLNLLIYIIATLTLFLML), 242–262 (TAILLTLLSLGGLPPLTGFMP), 276–296 (IIMATLMALSALLNLFFYMRI), and 323–343 (INIIPTLTIISSLLLPLTPLL).

The protein belongs to the complex I subunit 2 family. As to quaternary structure, core subunit of respiratory chain NADH dehydrogenase (Complex I) which is composed of 45 different subunits. Interacts with TMEM242.

It is found in the mitochondrion inner membrane. The catalysed reaction is a ubiquinone + NADH + 5 H(+)(in) = a ubiquinol + NAD(+) + 4 H(+)(out). In terms of biological role, core subunit of the mitochondrial membrane respiratory chain NADH dehydrogenase (Complex I) that is believed to belong to the minimal assembly required for catalysis. Complex I functions in the transfer of electrons from NADH to the respiratory chain. The immediate electron acceptor for the enzyme is believed to be ubiquinone. The chain is NADH-ubiquinone oxidoreductase chain 2 from Osphranter robustus (Wallaroo).